The chain runs to 292 residues: Phosphatidylglycerol--prolipoprotein diacylglyceryl transferase (292 aa).

The next 4 membrane-spanning stretches (helical) occupy residues 24–44 (ISVH…LLIA), 65–85 (FFIW…VLIY), 110–130 (GISG…AIIF), and 136–156 (QSFW…YVFG). An a 1,2-diacyl-sn-glycero-3-phospho-(1'-sn-glycerol)-binding site is contributed by Arg-157. Transmembrane regions (helical) follow at residues 192 to 212 (SQLF…ICLL), 219 to 239 (GTLL…CEYF), and 256 to 276 (GQIL…FVFV).

Belongs to the Lgt family.

It is found in the cell inner membrane. The catalysed reaction is L-cysteinyl-[prolipoprotein] + a 1,2-diacyl-sn-glycero-3-phospho-(1'-sn-glycerol) = an S-1,2-diacyl-sn-glyceryl-L-cysteinyl-[prolipoprotein] + sn-glycerol 1-phosphate + H(+). The protein operates within protein modification; lipoprotein biosynthesis (diacylglyceryl transfer). In terms of biological role, catalyzes the transfer of the diacylglyceryl group from phosphatidylglycerol to the sulfhydryl group of the N-terminal cysteine of a prolipoprotein, the first step in the formation of mature lipoproteins. The sequence is that of Phosphatidylglycerol--prolipoprotein diacylglyceryl transferase from Helicobacter hepaticus (strain ATCC 51449 / 3B1).